A 185-amino-acid chain; its full sequence is Ribosome-recycling factor (185 aa).

This sequence belongs to the RRF family.

The protein localises to the cytoplasm. In terms of biological role, responsible for the release of ribosomes from messenger RNA at the termination of protein biosynthesis. May increase the efficiency of translation by recycling ribosomes from one round of translation to another. The sequence is that of Ribosome-recycling factor from Shewanella woodyi (strain ATCC 51908 / MS32).